The following is a 340-amino-acid chain: Uroporphyrinogen decarboxylase (340 aa).

Residues R21–R25, D71, Y148, S203, and H316 contribute to the substrate site.

It belongs to the uroporphyrinogen decarboxylase family. In terms of assembly, homodimer.

The protein localises to the cytoplasm. The catalysed reaction is uroporphyrinogen III + 4 H(+) = coproporphyrinogen III + 4 CO2. It functions in the pathway porphyrin-containing compound metabolism; protoporphyrin-IX biosynthesis; coproporphyrinogen-III from 5-aminolevulinate: step 4/4. Catalyzes the decarboxylation of four acetate groups of uroporphyrinogen-III to yield coproporphyrinogen-III. The polypeptide is Uroporphyrinogen decarboxylase (Campylobacter jejuni subsp. jejuni serotype O:23/36 (strain 81-176)).